The sequence spans 615 residues: Prickle planar cell polarity protein 3 (615 aa).

A compositionally biased stretch (basic residues) spans 1-12; it reads MFARGSRRRRSG. Residues 1-26 form a disordered region; sequence MFARGSRRRRSGRAPPEAEDPDRGQP. The 109-residue stretch at 74 to 182 folds into the PET domain; sequence SDFQRHSISD…IVRIFPVTIT (109 aa). 3 consecutive LIM zinc-binding domains span residues 184-249, 250-309, and 310-373; these read AICE…CLRP, RCQA…RHAE, and YCDG…SEPT. 2 disordered regions span residues 396–567 and 587–615; these read ASFS…LGER and TFNS…CIVA. Residues 405 to 415 are compositionally biased toward polar residues; the sequence is SETTTKGTSTE. Serine 475 and serine 491 each carry phosphoserine. Over residues 508 to 531 the composition is skewed to basic residues; that stretch reads PSRRRHHHHNHHHHHNRHPSRRRH. Residues 537–555 are compositionally biased toward low complexity; it reads GSGSDSESCSSSPSSSSSE. A compositionally biased stretch (basic and acidic residues) spans 606–615; it reads QARDKNCIVA.

This sequence belongs to the prickle / espinas / testin family. In terms of assembly, interacts with VANGL2 via its C-terminus. The VANGL2-dependent membrane recruitment of PRICKLE3 is a prerequisite for its polarization. Interacts with WTIP. WTIP is involved in the recruitment of PRICKLE3 to the basal body. Interacts with MT-ATP8, a component of the mitochondrial complex V. In terms of tissue distribution, widely expressed.

The protein resides in the cytoplasm. Its subcellular location is the cell membrane. It is found in the mitochondrion. In terms of biological role, involved in the planar cell polarity (PCP) pathway that is essential for the polarization of epithelial cells during morphogenetic processes, including gastrulation and neurulation. PCP is maintained by two molecular modules, the global and the core modules, PRICKLE3 being part of the core module. Distinct complexes of the core module segregate to opposite sides of the cell, where they interact with the opposite complex in the neighboring cell at or near the adherents junctions. Involved in the organization of the basal body. Involved in cilia growth and positioning. Required for proper assembly, stability, and function of mitochondrial membrane ATP synthase (mitochondrial complex V). The protein is Prickle planar cell polarity protein 3 of Homo sapiens (Human).